We begin with the raw amino-acid sequence, 159 residues long: Secreted RxLR effector protein 50 (159 aa).

The signal sequence occupies residues 1–19; it reads MRSSTVLYVLGAAILAVNG. Positions 38–54 match the RxLR-dEER motif; it reads RWLRSNAMEHETDDEER.

It belongs to the RxLR effector family.

It is found in the secreted. Its subcellular location is the host nucleus. The protein localises to the host cytoplasm. In terms of biological role, secreted effector that completely suppresses the host cell death induced by cell death-inducing proteins. This chain is Secreted RxLR effector protein 50, found in Plasmopara viticola (Downy mildew of grapevine).